Consider the following 1190-residue polypeptide: Phosphatidylinositol 3,4,5-trisphosphate 5-phosphatase 1 (1190 aa).

An SH2 domain is found at 8–104 (WNHGNITRSK…GLVTHLQFPV (97 aa)). Positions 111-120 (AIDEPEEDTE) are enriched in acidic residues. Residues 111–130 (AIDEPEEDTESVMSPPELPP) are disordered. The short motif at 126–131 (PELPPR) is the SH3-binding 1 element. The residue at position 245 (serine 245) is a Phosphoserine. Residues 914-917 (NPNY) carry the NPXY motif 1 motif. A Phosphotyrosine modification is found at tyrosine 917. Serine 934 carries the phosphoserine modification. Tyrosine 944 carries the phosphotyrosine modification. The segment at 946–1190 (QLPKDSSLGP…ESLLGRTAMQ (245 aa)) is disordered. The span at 961–971 (PPTPPSQPPLS) shows a compositional bias: pro residues. Residue threonine 963 is modified to Phosphothreonine. 2 positions are modified to phosphoserine: serine 966 and serine 971. Residues 969 to 974 (PLSPKK) carry the SH3-binding 2 motif. Residues 989 to 998 (QETRPGDLGK) are compositionally biased toward basic and acidic residues. Positions 1014–1028 (MFENPLYGSVSPFPK) are interaction with DAB2. Positions 1017–1020 (NPLY) match the NPXY motif 2 motif. The residue at position 1020 (tyrosine 1020) is a Phosphotyrosine. The segment covering 1031–1045 (PRKEQESPKMMRKEP) has biased composition (basic and acidic residues). An SH3-binding 3 motif is present at residues 1038 to 1049 (PKMMRKEPPPCP). The segment covering 1140 to 1149 (IPAPRPPLPV) has biased composition (pro residues). Basic and acidic residues predominate over residues 1161–1183 (KGRDYRDNTELPHHGKHRQEESL).

This sequence belongs to the inositol 1,4,5-trisphosphate 5-phosphatase family. Interacts with tyrosine phosphorylated forms of SHC1. Interacts with tyrosine phosphorylated form of DOK1. Interacts with tyrosine phosphorylated form of DOK3. Interacts with tyrosine phosphorylated form of SLAMF1/CD150. Interacts with PTPN11/SHP-2 in response to IL-3. Interacts with receptor EPOR. Interacts with receptors MS4A2/FCER1B and FCER1G. Interacts with receptors FCGR2B and FCGR3. Interacts with receptor FCGR2A, leading to regulate gene expression during the phagocytic process. Interacts with GRB2. Interacts with PLCG1. Interacts with tyrosine kinases SRC and TEC. Interacts with c-Met/MET. Interacts with MILR1 (tyrosine-phosphorylated). Can weakly interact (via NPXY motif 2) with DAB2 (via PID domain); the interaction is impaired by tyrosine phosphorylation of the NPXY motif. Interacts (via SH2 domain) with tyrosine phosphorylated KLRC1 (via ITIM). Interacts with MPL/TPOR. In terms of processing, tyrosine phosphorylated by the members of the SRC family after exposure to a diverse array of extracellular stimuli such as cytokines, growth factors, antibodies, chemokines, integrin ligands and hypertonic and oxidative stress. Phosphorylated upon IgG receptor FCGR2B-binding.

The protein resides in the cytoplasm. Its subcellular location is the cell membrane. It localises to the membrane raft. It is found in the cytoskeleton. It carries out the reaction a 1,2-diacyl-sn-glycero-3-phospho-(1D-myo-inositol-3,4,5-trisphosphate) + H2O = a 1,2-diacyl-sn-glycero-3-phospho-(1D-myo-inositol-3,4-bisphosphate) + phosphate. The enzyme catalyses 1D-myo-inositol 1,3,4,5-tetrakisphosphate + H2O = 1D-myo-inositol 1,3,4-trisphosphate + phosphate. It catalyses the reaction a 1,2-diacyl-sn-glycero-3-phospho-(1D-myo-inositol-4,5-bisphosphate) + H2O = a 1,2-diacyl-sn-glycero-3-phospho-(1D-myo-inositol 4-phosphate) + phosphate. Its activity is regulated as follows. Activated upon translocation to the sites of synthesis of PtdIns(3,4,5)P3 in the membrane. Functionally, phosphatidylinositol (PtdIns) phosphatase that specifically hydrolyzes the 5-phosphate of phosphatidylinositol-3,4,5-trisphosphate (PtdIns(3,4,5)P3) to produce PtdIns(3,4)P2, thereby negatively regulating the PI3K (phosphoinositide 3-kinase) pathways. Also able to hydrolyze the 5-phosphate of phosphatidylinositol-4,5-bisphosphate (PtdIns(4,5)P3) and inositol 1,3,4,5-tetrakisphosphate. Acts as a negative regulator of B-cell antigen receptor signaling. Mediates signaling from the FC-gamma-RIIB receptor (FCGR2B), playing a central role in terminating signal transduction from activating immune/hematopoietic cell receptor systems. Acts as a negative regulator of myeloid cell proliferation/survival and chemotaxis, mast cell degranulation, immune cells homeostasis, integrin alpha-IIb/beta-3 signaling in platelets and JNK signaling in B-cells. Regulates proliferation of osteoclast precursors, macrophage programming, phagocytosis and activation and is required for endotoxin tolerance. Involved in the control of cell-cell junctions, CD32a signaling in neutrophils and modulation of EGF-induced phospholipase C activity. Key regulator of neutrophil migration, by governing the formation of the leading edge and polarization required for chemotaxis. Modulates FCGR3/CD16-mediated cytotoxicity in NK cells. Mediates the activin/TGF-beta-induced apoptosis through its Smad-dependent expression. The polypeptide is Phosphatidylinositol 3,4,5-trisphosphate 5-phosphatase 1 (Inpp5d) (Rattus norvegicus (Rat)).